The following is a 365-amino-acid chain: Caffeic acid 3-O-methyltransferase (365 aa).

130-136 (MNQDKVL) is a binding site for substrate. The tract at residues 162–180 (AFEYHGTDPRFNKVFNRGM) is substrate binding. Residues G208, D231, D251, M252, and K265 each coordinate S-adenosyl-L-methionine. Residue H269 is the Proton acceptor of the active site.

This sequence belongs to the class I-like SAM-binding methyltransferase superfamily. Cation-independent O-methyltransferase family. COMT subfamily. In terms of assembly, homodimer.

It catalyses the reaction (E)-caffeate + S-adenosyl-L-methionine = (E)-ferulate + S-adenosyl-L-homocysteine + H(+). Its pathway is aromatic compound metabolism; phenylpropanoid biosynthesis. In terms of biological role, catalyzes the conversion of caffeic acid to ferulic acid and of 5-hydroxyferulic acid to sinapic acid. The resulting products may subsequently be converted to the corresponding alcohols that are incorporated into lignins. The protein is Caffeic acid 3-O-methyltransferase (COMT1) of Prunus dulcis (Almond).